The chain runs to 472 residues: Riboflavin transporter RibJ (472 aa).

Topologically, residues 1–11 (MLPCFTRKPVD) are cytoplasmic. A helical membrane pass occupies residues 12–32 (HPLGFLVALSGLLMQLMSYGI). The Extracellular portion of the chain corresponds to 33 to 58 (DNSYSIFSDDMHKDPSLGYPSVTTIS). Residues 59–79 (LGNSVSLGLSPAFGVLCGFLV) form a helical membrane-spanning segment. The Cytoplasmic portion of the chain corresponds to 80–85 (DRVPPR). Residues 86–106 (LMMAVSTLMLFAGLWLSSTFA) form a helical membrane-spanning segment. Topologically, residues 107-108 (HN) are extracellular. Residue Asn108 is glycosylated (N-linked (GlcNAc...) asparagine). Residues 109–129 (VTAVTFSYCLLASISSACMLS) form a helical membrane-spanning segment. Over 130-144 (PGAAATSSWFNRYQG) the chain is Cytoplasmic. Residues 145–165 (LAMGINFSGGGVGSAIIPSLA) form a helical membrane-spanning segment. The Extracellular portion of the chain corresponds to 166–179 (GKWVVAYGWRKTFR). A helical transmembrane segment spans residues 180–196 (LMSAFCAIGVVATLLSA). Residues 197 to 271 (RRAPPKKEEA…TMFSRAFLGN (75 aa)) lie on the Cytoplasmic side of the membrane. Residues 200–248 (PPKKEEAGPSEYDEGQERQEQGEEEQAHTDEENRNNNNSNGETTPARRG) are disordered. Over residues 214-233 (GQERQEQGEEEQAHTDEENR) the composition is skewed to basic and acidic residues. The helical transmembrane segment at 272–292 (FFCWLIFSWAFYSLIYVAVPY) threads the bilayer. Topologically, residues 293–315 (VSSMGKAGTVYADISPIPTDIAS) are extracellular. The helical transmembrane segment at 316-336 (TLFTFYGVFQIVGSILVGWLA) threads the bilayer. At 337–341 (TGTTN) the chain is on the cytoplasmic side. The helical transmembrane segment at 342–362 (EFAYVLCATIGGIFCAFLGFC) threads the bilayer. Over 363–365 (RSY) the chain is Extracellular. A helical transmembrane segment spans residues 366 to 386 (VAFALLLCVIGFCMAGMFAVM). At 387-399 (PALIAERLYGPNL) the chain is on the cytoplasmic side. A helical transmembrane segment spans residues 400–420 (GFYMGAVFLAGVVGGFSAPPI). Topologically, residues 421–434 (QAELQQRHYGNYTY) are extracellular. Asn431 carries N-linked (GlcNAc...) asparagine glycosylation. Residues 435–455 (VCVFMSACMTLAAAVCYITMW) traverse the membrane as a helical segment. Residues 456–472 (RDKRVRIVSAAAEAKLA) lie on the Cytoplasmic side of the membrane.

Belongs to the major facilitator superfamily. RibJ family.

It localises to the cell membrane. Transporter involved in riboflavin (vitamin B2) uptake. Also transports FMN and FAD. This is Riboflavin transporter RibJ from Trypanosoma cruzi (strain CL Brener).